Consider the following 769-residue polypeptide: Serine protease HtrA-like (769 aa).

Positions 1–20 (MDIGKKHVIPKSQYRRKRRE) are enriched in basic residues. The interval 1–390 (MDIGKKHVIP…ATSKLNKGRA (390 aa)) is disordered. Basic and acidic residues-rich tracts occupy residues 21–64 (FFHN…ERFK) and 71–108 (LEQRNRDVNENKAEESKSNQDSKSAYNRDHYLTDDVSK). Residues 126–137 (YEQNSEATLSTK) are compositionally biased toward polar residues. Positions 138–186 (STDKVESTEMRKLSSDKNKVGHEEQHVLSKPSEHDKETRIDSESSRTDS) are enriched in basic and acidic residues. A compositionally biased stretch (polar residues) spans 247 to 262 (QQSQNEQTKTYTYGDS). Composition is skewed to basic and acidic residues over residues 264 to 296 (QNDKSNHENDLSHHIPSISDDKDNVMRENHIVD) and 310 to 330 (KTDDDRKLDEKIHVEDKHKQN). The span at 331 to 347 (ADSSETVGYQSQSTASH) shows a compositional bias: polar residues. The span at 348–364 (RSTEKRNISINDHDKLN) shows a compositional bias: basic and acidic residues. Positions 365–390 (GQKTNTKTSANNNQKKATSKLNKGRA) are enriched in polar residues. The helical transmembrane segment at 410–430 (LVILMGIIILIVILNAIFNNV) threads the bilayer. Residues His504, Asp534, and Ser619 each act as charge relay system in the active site. One can recognise a PDZ domain in the interval 680–733 (IVSLNSFERQAVKLPGKVKNGVVVDQVDNNGLADQSGLKKGDVITELDGKLLED).

Belongs to the peptidase S1C family.

Its subcellular location is the cell membrane. In Staphylococcus aureus (strain NCTC 8325 / PS 47), this protein is Serine protease HtrA-like.